The following is a 593-amino-acid chain: Elongation factor 4 (593 aa).

The 180-residue stretch at 2 to 181 folds into the tr-type G domain; it reads KNIRNFCIIA…AVVERIPHPT (180 aa). Residues 14–19 and 128–131 each bind GTP; these read DHGKST and NKCD.

This sequence belongs to the TRAFAC class translation factor GTPase superfamily. Classic translation factor GTPase family. LepA subfamily.

The protein localises to the cell inner membrane. The catalysed reaction is GTP + H2O = GDP + phosphate + H(+). Its function is as follows. Required for accurate and efficient protein synthesis under certain stress conditions. May act as a fidelity factor of the translation reaction, by catalyzing a one-codon backward translocation of tRNAs on improperly translocated ribosomes. Back-translocation proceeds from a post-translocation (POST) complex to a pre-translocation (PRE) complex, thus giving elongation factor G a second chance to translocate the tRNAs correctly. Binds to ribosomes in a GTP-dependent manner. The protein is Elongation factor 4 of Phocaeicola vulgatus (strain ATCC 8482 / DSM 1447 / JCM 5826 / CCUG 4940 / NBRC 14291 / NCTC 11154) (Bacteroides vulgatus).